We begin with the raw amino-acid sequence, 173 residues long: MIITIGGLAGTGTSTTAKTLSQEINIPFISAGDVFRQMAVENNMTLLEFSEFAEGNDNIDKALDKRQAEIANNSENLIVEGRISAFFVNADYRIWLKAPDNVRAERISYREDKSLDTVKQEIAERTASERKRYMEIHDIDIDNLDIYDLIINTDTFNIESTVNIIKKCIENKK.

7–15 contacts ATP; sequence GLAGTGTST.

The protein belongs to the cytidylate kinase family. Type 2 subfamily.

It is found in the cytoplasm. The catalysed reaction is CMP + ATP = CDP + ADP. It catalyses the reaction dCMP + ATP = dCDP + ADP. This is Cytidylate kinase from Methanosphaera stadtmanae (strain ATCC 43021 / DSM 3091 / JCM 11832 / MCB-3).